The chain runs to 196 residues: Guanylate kinase (196 aa).

A Guanylate kinase-like domain is found at 8–191; the sequence is GRLIVLTGPT…AAADLWSVIA (184 aa). 15-22 contributes to the ATP binding site; it reads GPTAVGKG.

Belongs to the guanylate kinase family.

It localises to the cytoplasm. It carries out the reaction GMP + ATP = GDP + ADP. Its function is as follows. Essential for recycling GMP and indirectly, cGMP. This chain is Guanylate kinase, found in Bifidobacterium longum (strain NCC 2705).